We begin with the raw amino-acid sequence, 643 residues long: Ecto-NOX disulfide-thiol exchanger 1 (643 aa).

One can recognise an RRM domain in the interval 142 to 221 (KTVFVGGLPE…GRLHVDFAQA (80 aa)). 2 coiled-coil regions span residues 307–342 (VQSA…LTGI) and 425–521 (QAYA…QLKG).

This sequence belongs to the ENOX family. Requires Cu cation as cofactor.

It is found in the cell membrane. It localises to the secreted. The protein localises to the extracellular space. With respect to regulation, not inhibited by the antitumor sulfonylurea LY181984, the vabilloid capsaicin, and retinoids. Its function is as follows. Probably acts as a terminal oxidase of plasma electron transport from cytosolic NAD(P)H via hydroquinones to acceptors at the cell surface. Hydroquinone oxidase activity alternates with a protein disulfide-thiol interchange/oxidoreductase activity which may control physical membrane displacements associated with vesicle budding or cell enlargement. The activities oscillate with a period length of 24 minutes and play a role in control of the ultradian cellular biological clock. The polypeptide is Ecto-NOX disulfide-thiol exchanger 1 (Enox1) (Mus musculus (Mouse)).